The chain runs to 177 residues: Phycocyanin PC645 beta subunit (177 aa).

Tyr-18 contacts mesobiliverdin. 3 residues coordinate (2R,3E)-phycocyanobilin: Lys-28, Asn-35, and Asp-39. 15,16-dihydrobiliverdin contacts are provided by Cys-50, Asp-54, and Cys-61. (2R,3E)-phycocyanobilin-binding residues include Asn-72, Arg-77, Cys-82, Arg-84, and Asp-85. Position 148 (Gln-148) interacts with 15,16-dihydrobiliverdin. (2R,3E)-phycocyanobilin is bound by residues Pro-154, Gly-156, and Cys-158.

Belongs to the phycobiliprotein family. In terms of assembly, heterotetramer of 2 different alpha chains and 2 identical beta chains which form 2 alpha-beta heterodimers within the heterotetramer. In terms of processing, contains two phycocyanobilin chromophores, one mesobiliverdin chromophore and one 15,16-dihydrobiliverdin chromophore with binding mediated by both the alpha and beta subunits.

It is found in the plastid. The protein localises to the chloroplast thylakoid membrane. Functionally, light-harvesting photosynthetic tetrapyrrole chromophore-protein from the phycobiliprotein complex. The sequence is that of Phycocyanin PC645 beta subunit from Chroomonas sp. (strain CCMP270).